The sequence spans 427 residues: Gamma-glutamyl phosphate reductase (427 aa).

Belongs to the gamma-glutamyl phosphate reductase family.

It is found in the cytoplasm. It carries out the reaction L-glutamate 5-semialdehyde + phosphate + NADP(+) = L-glutamyl 5-phosphate + NADPH + H(+). The protein operates within amino-acid biosynthesis; L-proline biosynthesis; L-glutamate 5-semialdehyde from L-glutamate: step 2/2. Its function is as follows. Catalyzes the NADPH-dependent reduction of L-glutamate 5-phosphate into L-glutamate 5-semialdehyde and phosphate. The product spontaneously undergoes cyclization to form 1-pyrroline-5-carboxylate. The protein is Gamma-glutamyl phosphate reductase of Rhizobium johnstonii (strain DSM 114642 / LMG 32736 / 3841) (Rhizobium leguminosarum bv. viciae).